A 380-amino-acid polypeptide reads, in one-letter code: Cytochrome b (380 aa).

4 helical membrane-spanning segments follow: residues 34–54 (FGSL…LLAT), 78–99 (WLIR…YLHI), 114–134 (WNTG…GYVL), and 179–199 (FFAL…IHLT). 2 residues coordinate heme b: histidine 84 and histidine 98. The heme b site is built by histidine 183 and histidine 197. Residue histidine 202 participates in a ubiquinone binding. A run of 4 helical transmembrane segments spans residues 227-247 (LKDT…ALFS), 289-309 (LGGV…PLLH), 321-341 (FSQF…WVGS), and 348-368 (FIII…ILLP).

This sequence belongs to the cytochrome b family. The cytochrome bc1 complex contains 11 subunits: 3 respiratory subunits (MT-CYB, CYC1 and UQCRFS1), 2 core proteins (UQCRC1 and UQCRC2) and 6 low-molecular weight proteins (UQCRH/QCR6, UQCRB/QCR7, UQCRQ/QCR8, UQCR10/QCR9, UQCR11/QCR10 and a cleavage product of UQCRFS1). This cytochrome bc1 complex then forms a dimer. Heme b is required as a cofactor.

The protein localises to the mitochondrion inner membrane. Its function is as follows. Component of the ubiquinol-cytochrome c reductase complex (complex III or cytochrome b-c1 complex) that is part of the mitochondrial respiratory chain. The b-c1 complex mediates electron transfer from ubiquinol to cytochrome c. Contributes to the generation of a proton gradient across the mitochondrial membrane that is then used for ATP synthesis. The chain is Cytochrome b (MT-CYB) from Garrodia nereis (Grey-backed storm-petrel).